A 486-amino-acid polypeptide reads, in one-letter code: Siroheme synthase (486 aa).

Residues 1-204 (MNYLPIFVDL…HQIEQAEALV (204 aa)) form a precorrin-2 dehydrogenase /sirohydrochlorin ferrochelatase region. NAD(+) is bound by residues 22-23 (HV) and 43-44 (EK). The residue at position 128 (Ser-128) is a Phosphoserine. The interval 216–486 (GEVSLVGAGP…NKETHWKQAA (271 aa)) is uroporphyrinogen-III C-methyltransferase. Pro-225 is a binding site for S-adenosyl-L-methionine. Asp-248 serves as the catalytic Proton acceptor. Lys-270 acts as the Proton donor in catalysis. S-adenosyl-L-methionine contacts are provided by residues 301 to 303 (GGD), Val-306, 331 to 332 (TA), Met-383, and Gly-412.

This sequence in the N-terminal section; belongs to the precorrin-2 dehydrogenase / sirohydrochlorin ferrochelatase family. In the C-terminal section; belongs to the precorrin methyltransferase family.

It catalyses the reaction uroporphyrinogen III + 2 S-adenosyl-L-methionine = precorrin-2 + 2 S-adenosyl-L-homocysteine + H(+). The enzyme catalyses precorrin-2 + NAD(+) = sirohydrochlorin + NADH + 2 H(+). It carries out the reaction siroheme + 2 H(+) = sirohydrochlorin + Fe(2+). The protein operates within cofactor biosynthesis; adenosylcobalamin biosynthesis; precorrin-2 from uroporphyrinogen III: step 1/1. It participates in cofactor biosynthesis; adenosylcobalamin biosynthesis; sirohydrochlorin from precorrin-2: step 1/1. Its pathway is porphyrin-containing compound metabolism; siroheme biosynthesis; precorrin-2 from uroporphyrinogen III: step 1/1. It functions in the pathway porphyrin-containing compound metabolism; siroheme biosynthesis; siroheme from sirohydrochlorin: step 1/1. The protein operates within porphyrin-containing compound metabolism; siroheme biosynthesis; sirohydrochlorin from precorrin-2: step 1/1. Functionally, multifunctional enzyme that catalyzes the SAM-dependent methylations of uroporphyrinogen III at position C-2 and C-7 to form precorrin-2 via precorrin-1. Then it catalyzes the NAD-dependent ring dehydrogenation of precorrin-2 to yield sirohydrochlorin. Finally, it catalyzes the ferrochelation of sirohydrochlorin to yield siroheme. The chain is Siroheme synthase from Actinobacillus pleuropneumoniae serotype 7 (strain AP76).